Here is a 395-residue protein sequence, read N- to C-terminus: Tryptophan synthase beta chain (395 aa).

Lysine 89 is subject to N6-(pyridoxal phosphate)lysine.

Belongs to the TrpB family. Tetramer of two alpha and two beta chains. The cofactor is pyridoxal 5'-phosphate.

It carries out the reaction (1S,2R)-1-C-(indol-3-yl)glycerol 3-phosphate + L-serine = D-glyceraldehyde 3-phosphate + L-tryptophan + H2O. The protein operates within amino-acid biosynthesis; L-tryptophan biosynthesis; L-tryptophan from chorismate: step 5/5. Functionally, the beta subunit is responsible for the synthesis of L-tryptophan from indole and L-serine. The polypeptide is Tryptophan synthase beta chain (Fusobacterium nucleatum subsp. nucleatum (strain ATCC 25586 / DSM 15643 / BCRC 10681 / CIP 101130 / JCM 8532 / KCTC 2640 / LMG 13131 / VPI 4355)).